A 398-amino-acid polypeptide reads, in one-letter code: Cysteine protease ATG4A (398 aa).

Cysteine 77 functions as the Nucleophile in the catalytic mechanism. Active-site residues include aspartate 279 and histidine 281. The short motif at 393–396 is the LIR element; it reads FEIL.

Belongs to the peptidase C54 family. As to quaternary structure, interacts with ATG9A; the interaction is direct.

Its subcellular location is the cytoplasm. The catalysed reaction is [protein]-C-terminal L-amino acid-glycyl-phosphatidylethanolamide + H2O = [protein]-C-terminal L-amino acid-glycine + a 1,2-diacyl-sn-glycero-3-phosphoethanolamine. Its activity is regulated as follows. Inhibited by N-ethylmaleimide. Redox-regulated during autophagy since reducing conditions activate ATG4A whereas an oxidizing environment such as the presence of H(2)O(2) inhibits its activity. Cysteine protease that plays a key role in autophagy by mediating both proteolytic activation and delipidation of ATG8 family proteins. The protease activity is required for proteolytic activation of ATG8 family proteins: cleaves the C-terminal amino acid of ATG8 proteins to reveal a C-terminal glycine. Exposure of the glycine at the C-terminus is essential for ATG8 proteins conjugation to phosphatidylethanolamine (PE) and insertion to membranes, which is necessary for autophagy. Preferred substrate is GABARAPL2 followed by MAP1LC3A and GABARAP. Protease activity is also required to counteract formation of high-molecular weight conjugates of ATG8 proteins (ATG8ylation): acts as a deubiquitinating-like enzyme that removes ATG8 conjugated to other proteins, such as ATG3. In addition to the protease activity, also mediates delipidation of ATG8 family proteins. Catalyzes delipidation of PE-conjugated forms of ATG8 proteins during macroautophagy. Compared to ATG4B, the major protein for proteolytic activation of ATG8 proteins, shows weaker ability to cleave the C-terminal amino acid of ATG8 proteins, while it displays stronger delipidation activity. Involved in phagophore growth during mitophagy independently of its protease activity and of ATG8 proteins: acts by regulating ATG9A trafficking to mitochondria and promoting phagophore-endoplasmic reticulum contacts during the lipid transfer phase of mitophagy. This chain is Cysteine protease ATG4A, found in Pongo abelii (Sumatran orangutan).